Here is a 380-residue protein sequence, read N- to C-terminus: Maintenance of mitochondrial morphology protein 1 (380 aa).

At 1-64 (MQGRAIWAEG…IVPSLSFIQG (64 aa)) the chain is on the lumenal side. A helical transmembrane segment spans residues 65–85 (FMAGQAVLLMLFLGLFRYFFM). Over 86-380 (TSSPGTRAQQ…IGTSPADPLA (295 aa)) the chain is Cytoplasmic. The SMP-LTD domain occupies 147-369 (APESLDWLNV…WPHFWHIPLP (223 aa)).

Belongs to the MMM1 family. As to quaternary structure, homodimer. Component of the ER-mitochondria encounter structure (ERMES) or MDM complex, composed of MMM1, MDM10, MDM12 and MDM34. An MMM1 homodimer associates with one molecule of MDM12 on each side in a pairwise head-to-tail manner, and the SMP-LTD domains of MMM1 and MDM12 generate a continuous hydrophobic tunnel for phospholipid trafficking.

The protein localises to the endoplasmic reticulum membrane. Its function is as follows. Component of the ERMES/MDM complex, which serves as a molecular tether to connect the endoplasmic reticulum (ER) and mitochondria. Components of this complex are involved in the control of mitochondrial shape and protein biogenesis, and function in nonvesicular lipid trafficking between the ER and mitochondria. The MDM12-MMM1 subcomplex functions in the major beta-barrel assembly pathway that is responsible for biogenesis of all outer membrane beta-barrel proteins, and acts in a late step after the SAM complex. The MDM10-MDM12-MMM1 subcomplex further acts in the TOM40-specific pathway after the action of the MDM12-MMM1 complex. Essential for establishing and maintaining the structure of mitochondria and maintenance of mtDNA nucleoids. This is Maintenance of mitochondrial morphology protein 1 from Malassezia globosa (strain ATCC MYA-4612 / CBS 7966) (Dandruff-associated fungus).